Here is a 199-residue protein sequence, read N- to C-terminus: MFRLLKRACSFLLLFVIYQSFVIHHNVQRVLAYKPMVEKTLAENDTKANVDLVLAMIYTETKGGEADVMQSSESSSGQKNSITDSQASIEHGVNLLSHNLALAEEAGVDSWTAVQAYNFGTAYIDYIAKHGGQNTVDLATTYSKTVVAPSLGNTSGQTYFYYHPLALISGGKLYKNGGNIYYSREVHFNLYLIELMSLF.

The protein localises to the cell surface. This is Pneumococcal vaccine antigen A homolog (pvaA) from Streptococcus pyogenes serotype M18 (strain MGAS8232).